A 235-amino-acid chain; its full sequence is Large ribosomal subunit protein uL1 (235 aa).

This sequence belongs to the universal ribosomal protein uL1 family. As to quaternary structure, part of the 50S ribosomal subunit.

Binds directly to 23S rRNA. The L1 stalk is quite mobile in the ribosome, and is involved in E site tRNA release. Functionally, protein L1 is also a translational repressor protein, it controls the translation of the L11 operon by binding to its mRNA. In Mycolicibacterium paratuberculosis (strain ATCC BAA-968 / K-10) (Mycobacterium paratuberculosis), this protein is Large ribosomal subunit protein uL1.